A 74-amino-acid polypeptide reads, in one-letter code: MKAAISLIIFFAILFVVIEAISYEEGKELFQKERAECVGDGQRCADWAGPYCCSGYYCSCRSMPYCRCRSDSGK.

The N-terminal stretch at 1-20 (MKAAISLIIFFAILFVVIEA) is a signal peptide. The propeptide occupies 21-34 (ISYEEGKELFQKER). Disulfide bonds link Cys-37–Cys-53, Cys-44–Cys-58, Cys-52–Cys-68, and Cys-60–Cys-66. A Serine amide modification is found at Ser-72.

Belongs to the neurotoxin 07 (Beta/delta-agtx) family. 02 (aga-3) subfamily. Expressed by the venom gland.

It localises to the secreted. Its function is as follows. Insecticidal neurotoxin that induces an irreversible spastic paralysis when injected into insects. Modifies presynaptic voltage-gated sodium channels (Nav), causing them to open at the normal resting potential of the nerve. This leads to spontaneous release of neurotransmitter and repetitive action potentials in motor neurons. The polypeptide is U3-agatoxin-Ao1b (Agelena orientalis (Funnel-web spider)).